The chain runs to 103 residues: Acyl-CoA-binding protein (103 aa).

The region spanning 18–103 (HQADFDEAAE…AKTMVEKYGI (86 aa)) is the ACB domain. An acyl-CoA-binding positions include Lys-30, 45–49 (YGFYK), Lys-67, Lys-71, and Tyr-90.

It belongs to the ACBP family. Monomer.

It is found in the endoplasmic reticulum. The protein localises to the golgi apparatus. Functionally, binds medium- and long-chain acyl-CoA esters with very high affinity and may function as an intracellular carrier of acyl-CoA esters. It is also able to displace diazepam from the benzodiazepine (BZD) recognition site located on the GABA type A receptor. It is therefore possible that this protein also acts as a neuropeptide to modulate the action of the GABA receptor. This chain is Acyl-CoA-binding protein (DBI), found in Anas platyrhynchos (Mallard).